Reading from the N-terminus, the 207-residue chain is uncharacterized protein (207 aa).

Disordered regions lie at residues 1 to 81 (MNPT…GNTR) and 140 to 169 (TSQS…PPKK). Residues 21 to 40 (FEQTNSSASLTQKNSSSETE) are compositionally biased toward polar residues. The span at 58-70 (PTKRGSGRGRGRS) shows a compositional bias: basic residues. Residues 140–152 (TSQSIDAQPTPSQ) are compositionally biased toward polar residues. Over residues 156-165 (AHHEPHEKRG) the composition is skewed to basic and acidic residues.

Its subcellular location is the nucleus. It localises to the nucleolus. This is an uncharacterized protein from Schizosaccharomyces pombe (strain 972 / ATCC 24843) (Fission yeast).